The chain runs to 557 residues: Potassium-transporting ATPase potassium-binding subunit (557 aa).

Transmembrane regions (helical) follow at residues 5-25 (GFLL…PLGS), 63-83 (LCAI…MLLG), 132-152 (GLTV…FAFI), 170-190 (LLRI…LFLI), 253-273 (FVQM…FGEV), 283-303 (LLWA…WAEV), 329-349 (VLVS…AVIA), 356-376 (ALGG…FGGV), 379-399 (GLYG…LMIG), 416-436 (LTAL…ALAM), 484-504 (LLAF…MAIA), and 526-546 (LFVG…FIPA).

The protein belongs to the KdpA family. The system is composed of three essential subunits: KdpA, KdpB and KdpC.

The protein resides in the cell inner membrane. Functionally, part of the high-affinity ATP-driven potassium transport (or Kdp) system, which catalyzes the hydrolysis of ATP coupled with the electrogenic transport of potassium into the cytoplasm. This subunit binds the periplasmic potassium ions and delivers the ions to the membrane domain of KdpB through an intramembrane tunnel. This is Potassium-transporting ATPase potassium-binding subunit from Shigella boydii serotype 18 (strain CDC 3083-94 / BS512).